A 147-amino-acid polypeptide reads, in one-letter code: D-aminoacyl-tRNA deacylase (147 aa).

Residues 138–139 carry the Gly-cisPro motif, important for rejection of L-amino acids motif; it reads GP.

Belongs to the DTD family. Homodimer.

The protein resides in the cytoplasm. The enzyme catalyses glycyl-tRNA(Ala) + H2O = tRNA(Ala) + glycine + H(+). The catalysed reaction is a D-aminoacyl-tRNA + H2O = a tRNA + a D-alpha-amino acid + H(+). Its function is as follows. An aminoacyl-tRNA editing enzyme that deacylates mischarged D-aminoacyl-tRNAs. Also deacylates mischarged glycyl-tRNA(Ala), protecting cells against glycine mischarging by AlaRS. Acts via tRNA-based rather than protein-based catalysis; rejects L-amino acids rather than detecting D-amino acids in the active site. By recycling D-aminoacyl-tRNA to D-amino acids and free tRNA molecules, this enzyme counteracts the toxicity associated with the formation of D-aminoacyl-tRNA entities in vivo and helps enforce protein L-homochirality. The chain is D-aminoacyl-tRNA deacylase from Prosthecochloris aestuarii (strain DSM 271 / SK 413).